The sequence spans 257 residues: (R)-2-haloacid dehalogenase (257 aa).

Belongs to the HAD-like hydrolase superfamily. S-2-haloalkanoic acid dehalogenase family.

It catalyses the reaction an (R)-2-haloacid + H2O = a (2S)-2-hydroxycarboxylate + a halide anion + H(+). Functionally, catalyzes the hydrolytic dehalogenation of small (R)-2-haloalkanoic acids to yield the corresponding (S)-2-hydroxyalkanoic acids. Acts on acids of short chain lengths, C(2) to C(4), with inversion of configuration at C-2. The chain is (R)-2-haloacid dehalogenase (dehI) from Rhizobium sp. (strain NHG3).